The chain runs to 123 residues: MMGRNGIRLALKRSFSTYQPPVVEITNITKLWPTLRPEVRDEIKEYLRWRMQEDWRHIPLEETKAAYFLSYGPCGGRSKGNEWNVGYTGMRIVFNLVLFGGAATAFYNWKQDKKLEEQLRDLV.

Residues 1 to 37 (MMGRNGIRLALKRSFSTYQPPVVEITNITKLWPTLRP) constitute a mitochondrion transit peptide.

Its subcellular location is the mitochondrion. Its function is as follows. May be involved in telomere capping. The polypeptide is Maintenance of telomere capping protein 3, mitochondrial (MTC3) (Saccharomyces cerevisiae (strain ATCC 204508 / S288c) (Baker's yeast)).